We begin with the raw amino-acid sequence, 266 residues long: MAYDLKKESDVKEYVEKLGVEYRFGCYSEKKPEACHLLGDYLEGIKKDFEKASKVYKSTCDDYGYAKSCYKYGNYSFLGKGKSGSKGNPQVAYEYYEKGCNLNDSDACLHSGLLLVSKSMPREIDWNVPKGLEFLTKSCDLNNATACFYLSGMHISGVQKKADQSAVTASSGSGTSSPPAGQPPLKDSDYIVLKDMKKAFQFAHKACELRNMYACANLSQMYARGDGIEKNEKEAEKYKKLALEMQDEVKKQHDTLGFQQGVGMPN.

2 Sel1-like repeats span residues 32–64 and 66–104; these read PEAC…DDYG and AKSC…NLND. A compositionally biased stretch (low complexity) spans 166-179; the sequence is AVTASSGSGTSSPP. The tract at residues 166-187 is disordered; the sequence is AVTASSGSGTSSPPAGQPPLKD. The stretch at 212–247 is one Sel1-like 3 repeat; sequence MYACANLSQMYARGDGIEKNEKEAEKYKKLALEMQD.

Belongs to the hcp beta-lactamase family.

Its function is as follows. Required for locomotion. Probably involved in the regulation of formation/maintenance of motor neurons at presynaptic terminals at the neuromuscular junction. In Drosophila melanogaster (Fruit fly), this protein is Cytochrome c oxidase assembly factor 7 homolog.